Here is a 1387-residue protein sequence, read N- to C-terminus: Dicer-like protein 2-1 (1387 aa).

The Helicase ATP-binding domain maps to 26 to 205 (MFEASLKENI…LLKIESNLDA (180 aa)). 39-46 (MGTGSGKT) provides a ligand contact to ATP. A DEAH box motif is present at residues 146–149 (DEAH). The 166-residue stretch at 370–535 (KFRSLLEFLD…AYEDDERRLR (166 aa)) folds into the Helicase C-terminal domain. A Dicer dsRNA-binding fold domain is found at 565-659 (AVAHLNHFCA…LPFKRNLELK (95 aa)). RNase III domains lie at 915-1055 (ATRL…IDGG) and 1094-1277 (DDHL…IDSH). Residues Glu1133, Asp1263, and Glu1266 each coordinate Mg(2+).

This sequence belongs to the helicase family. Dicer subfamily. Requires Mg(2+) as cofactor. It depends on Mn(2+) as a cofactor.

Its function is as follows. Dicer-like endonuclease involved in cleaving double-stranded RNA in the RNA interference (RNAi) pathway. Produces 21 to 25 bp dsRNAs (siRNAs) which target the selective destruction of homologous RNAs leading to sequence-specific suppression of gene expression, called post-transcriptional gene silencing (PTGS). Part of a broad host defense response against viral infection and transposons. The protein is Dicer-like protein 2-1 (dcl2-1) of Aspergillus niger (strain ATCC MYA-4892 / CBS 513.88 / FGSC A1513).